Consider the following 378-residue polypeptide: Dual-specificity RNA methyltransferase RlmN 2 (378 aa).

Glu-113 acts as the Proton acceptor in catalysis. The region spanning 119-355 (TEDRRTLCVS…AAYIRRNRGR (237 aa)) is the Radical SAM core domain. Cys-126 and Cys-361 are disulfide-bonded. [4Fe-4S] cluster contacts are provided by Cys-133, Cys-137, and Cys-140. S-adenosyl-L-methionine is bound by residues 188–189 (GE), Ser-220, 242–244 (SLN), and Asn-318. The S-methylcysteine intermediate role is filled by Cys-361.

It belongs to the radical SAM superfamily. RlmN family. [4Fe-4S] cluster is required as a cofactor.

It is found in the cytoplasm. The enzyme catalyses adenosine(2503) in 23S rRNA + 2 reduced [2Fe-2S]-[ferredoxin] + 2 S-adenosyl-L-methionine = 2-methyladenosine(2503) in 23S rRNA + 5'-deoxyadenosine + L-methionine + 2 oxidized [2Fe-2S]-[ferredoxin] + S-adenosyl-L-homocysteine. It catalyses the reaction adenosine(37) in tRNA + 2 reduced [2Fe-2S]-[ferredoxin] + 2 S-adenosyl-L-methionine = 2-methyladenosine(37) in tRNA + 5'-deoxyadenosine + L-methionine + 2 oxidized [2Fe-2S]-[ferredoxin] + S-adenosyl-L-homocysteine. Its function is as follows. Specifically methylates position 2 of adenine 2503 in 23S rRNA and position 2 of adenine 37 in tRNAs. m2A2503 modification seems to play a crucial role in the proofreading step occurring at the peptidyl transferase center and thus would serve to optimize ribosomal fidelity. The protein is Dual-specificity RNA methyltransferase RlmN 2 of Myxococcus xanthus (strain DK1622).